Reading from the N-terminus, the 200-residue chain is Outer-membrane lipoprotein carrier protein (200 aa).

Positions 1-18 are cleaved as a signal peptide; the sequence is MKAVVFAMVMAVSFNVFA.

This sequence belongs to the LolA family. In terms of assembly, monomer.

It localises to the periplasm. In terms of biological role, participates in the translocation of lipoproteins from the inner membrane to the outer membrane. Only forms a complex with a lipoprotein if the residue after the N-terminal Cys is not an aspartate (The Asp acts as a targeting signal to indicate that the lipoprotein should stay in the inner membrane). This is Outer-membrane lipoprotein carrier protein from Idiomarina loihiensis (strain ATCC BAA-735 / DSM 15497 / L2-TR).